A 112-amino-acid chain; its full sequence is Iron-sulfur cluster insertion protein ErpA (112 aa).

Iron-sulfur cluster is bound by residues Cys40, Cys104, and Cys106.

This sequence belongs to the HesB/IscA family. Homodimer. Iron-sulfur cluster serves as cofactor.

Required for insertion of 4Fe-4S clusters for at least IspG. In Pseudoalteromonas translucida (strain TAC 125), this protein is Iron-sulfur cluster insertion protein ErpA.